The sequence spans 174 residues: Regenerating islet-derived protein 3-alpha (174 aa).

The signal sequence occupies residues 1–25; that stretch reads MLPRLSFNNVSWTLLYYLFIFQVRG. Residues 26 to 36 constitute a propeptide that is removed on maturation; sequence EDSQKAVPSTR. Disulfide bonds link Cys-39–Cys-50, Cys-67–Cys-170, and Cys-145–Cys-162. The C-type lectin domain maps to 46 to 171; the sequence is YRSYCYTLVT…CDVELPFVCK (126 aa). The tract at residues 102-117 is sufficient to activate EXTL3; sequence WIWLHDPTMGQQPNGG. Residues His-106 and Glu-120 each contribute to the Zn(2+) site.

In terms of assembly, forms a hexameric membrane-permeabilizing oligomeric pore on membrane phospholipids. The hexamer is formed by three dimers related by helical symmetry. Forms filaments, filamentation traps pore complexes and limits damage to host cells. Interacts with EXTL3. Post-translationally, proteolytic processing by trypsin removes an inhibitory N-terminal propeptide and is essential for peptidoglycan binding and antibacterial activity. In terms of tissue distribution, low expression found in healthy pancreas.

The protein localises to the secreted. Bactericidal C-type lectin. The lack of the EPN motif may explain its inability to bind peptidoglycan. Functionally, acts as a hormone in response to different stimuli like anti-inflammatory signals, such as IL17A, or gut microbiome. Secreted by different cell types to activate its receptor EXTL3 and induce cell specific signaling pathways. Induced by IL17A in keratinocytes, regulates keratinocyte proliferation and differentiation after skin injury via activation of EXTL3-PI3K-AKT signaling pathway. In parallel, inhibits skin inflammation through the inhibition of inflammatory cytokines such as IL6 and TNF. In pancreas, is able to permealize beta-cells membrane and stimulate their proliferation. The polypeptide is Regenerating islet-derived protein 3-alpha (Reg3a) (Rattus norvegicus (Rat)).